The chain runs to 885 residues: Dipeptidyl peptidase 9 (885 aa).

Active-site charge relay system residues include serine 752, aspartate 830, and histidine 862. Position 752 (serine 752) interacts with Val-boroPro.

The protein belongs to the peptidase S9B family. DPPIV subfamily. In terms of assembly, homodimer. Forms a ternary complex with NLRP1, composed of a DPP9 homodimer, one full-length NLRP1 protein, and one cleaved C-terminus of NLRP1 (NACHT, LRR and PYD domains-containing protein 1, C-terminus).

The protein localises to the nucleus. It catalyses the reaction Release of an N-terminal dipeptide, Xaa-Yaa-|-Zaa-, from a polypeptide, preferentially when Yaa is Pro, provided Zaa is neither Pro nor hydroxyproline.. In terms of biological role, dipeptidyl peptidase that cleaves off N-terminal dipeptides from proteins having a Pro or Ala residue at position 2. Acts as a key inhibitor of the NLRP1 inflammasome. This is Dipeptidyl peptidase 9 from Danio rerio (Zebrafish).